Reading from the N-terminus, the 425-residue chain is Serine--tRNA ligase (425 aa).

232–234 (TSE) serves as a coordination point for L-serine. Residues 263–265 (RRE) and Val279 each bind ATP. An L-serine-binding site is contributed by Glu286. 350–353 (EVVS) serves as a coordination point for ATP. Position 387 (Thr387) interacts with L-serine.

The protein belongs to the class-II aminoacyl-tRNA synthetase family. Type-1 seryl-tRNA synthetase subfamily. As to quaternary structure, homodimer. The tRNA molecule binds across the dimer.

Its subcellular location is the cytoplasm. The catalysed reaction is tRNA(Ser) + L-serine + ATP = L-seryl-tRNA(Ser) + AMP + diphosphate + H(+). It carries out the reaction tRNA(Sec) + L-serine + ATP = L-seryl-tRNA(Sec) + AMP + diphosphate + H(+). It functions in the pathway aminoacyl-tRNA biosynthesis; selenocysteinyl-tRNA(Sec) biosynthesis; L-seryl-tRNA(Sec) from L-serine and tRNA(Sec): step 1/1. Catalyzes the attachment of serine to tRNA(Ser). Is also able to aminoacylate tRNA(Sec) with serine, to form the misacylated tRNA L-seryl-tRNA(Sec), which will be further converted into selenocysteinyl-tRNA(Sec). This is Serine--tRNA ligase from Methanospirillum hungatei JF-1 (strain ATCC 27890 / DSM 864 / NBRC 100397 / JF-1).